The chain runs to 364 residues: TD and POZ domain-containing protein 2 (364 aa).

Residues 19-149 (EFCYEWTISN…KDKLTLCCKV (131 aa)) form the MATH domain. Residues 188–255 (TDCSLLVAGH…IYTGKAPTLH (68 aa)) enclose the BTB domain.

This sequence belongs to the Tdpoz family.

In Mus musculus (Mouse), this protein is TD and POZ domain-containing protein 2.